The primary structure comprises 724 residues: MLSQTSIPEVKEDVIGYALHQRRARVGQFQDLGPPDLITLIKSLPSSSSTTTATASANDNGATSNINGQDPTTIVTELHSHDKLKGQIGTFFYCMGIDTSDPTSITIFAKKITDLFLDTPQIWFGKKKHFHVSKISISSWNAFRKYDVNIIVHIPGTVQTYIINSDGEQSQLPSVAEASSGRNSQDLNVNMIWAETFMSGIVRDIMIMKDNRADGESQNLVETLIFNPFTSGELEDVANNFIKLFPLVYEKGVYLDAPTHVLNPSLTNNYLVETLVEIVRLTKSLEACRKMLKKLIEIHPEAVIILIRVYFACDLEIDAVDLINEQLNSPSSFLADDSKTSHIQLIFKSELLSIQSEFLLDVKRDYKLAKEVAMEAVNCAPNEFKTWYLLTRIYIKLNDMSNALLSLNACPMSQVKEKYVLRRIAPITSDENLHLPLPLDASIEEISSLNPMDVQLEQKSADPNLVNLSASSLKSTFQLAYKLLTEIVQITGWEQLLKYRSKIFVMEDEYQGSTSSIDEAEVRGNDISKMRSKRLCERWLDNLFMLLYEDLKTYTDWQSEQLYFDAQNSKYHKLTVEWELFGLCAKRLGHLPEAAKAFQIGLSQRFSPVCAKNLLQFYIDEHKRIRRDSVSANSELTSSQILSSINDIDSSIIDLVVKICCWNHRWYIEFSIILIDALSVAVQDMGITKVHNEIASRFSDPVAQLIDDNILNFLKNFTNDTFDN.

Residues 51-65 are compositionally biased toward low complexity; the sequence is TTATASANDNGATSN. The disordered stretch occupies residues 51–71; the sequence is TTATASANDNGATSNINGQDP. Residues 711 to 724 are CHS5-binding; the sequence is LNFLKNFTNDTFDN.

This sequence belongs to the CHAPS family. In terms of assembly, component of the CHS5/6 complex composed of the 4 CHAPS proteins BCH1, BCH2, BUD7, and CHS6 as well as at least CHS5 and GTP-bound ARF1. The complex interacts with the cargo protein CHS3.

The protein localises to the golgi apparatus. Its subcellular location is the trans-Golgi network membrane. Member of the CHS5-ARF1P-binding proteins (CHAPS) which mediates export of specific cargo proteins, including chitin synthase CHS3. In Saccharomyces cerevisiae (strain ATCC 204508 / S288c) (Baker's yeast), this protein is Protein BCH1 (BCH1).